The chain runs to 194 residues: Orotate phosphoribosyltransferase (194 aa).

A 5-phospho-alpha-D-ribose 1-diphosphate-binding site is contributed by 117 to 125; that stretch reads EDVVTTGLS. 2 residues coordinate orotate: T121 and R149.

The protein belongs to the purine/pyrimidine phosphoribosyltransferase family. PyrE subfamily. As to quaternary structure, homodimer. Mg(2+) is required as a cofactor.

It catalyses the reaction orotidine 5'-phosphate + diphosphate = orotate + 5-phospho-alpha-D-ribose 1-diphosphate. It participates in pyrimidine metabolism; UMP biosynthesis via de novo pathway; UMP from orotate: step 1/2. Its function is as follows. Catalyzes the transfer of a ribosyl phosphate group from 5-phosphoribose 1-diphosphate to orotate, leading to the formation of orotidine monophosphate (OMP). This is Orotate phosphoribosyltransferase from Novosphingobium aromaticivorans (strain ATCC 700278 / DSM 12444 / CCUG 56034 / CIP 105152 / NBRC 16084 / F199).